Consider the following 271-residue polypeptide: Phosphate import ATP-binding protein PstB (271 aa).

In terms of domain architecture, ABC transporter spans 13-266 (VRTAPVSEAE…PKHPYTEAYI (254 aa)). An ATP-binding site is contributed by 57-64 (GPSGCGKS).

The protein belongs to the ABC transporter superfamily. Phosphate importer (TC 3.A.1.7) family. The complex is composed of two ATP-binding proteins (PstB), two transmembrane proteins (PstC and PstA) and a solute-binding protein (PstS).

It is found in the cell inner membrane. The enzyme catalyses phosphate(out) + ATP + H2O = ADP + 2 phosphate(in) + H(+). Functionally, part of the ABC transporter complex PstSACB involved in phosphate import. Responsible for energy coupling to the transport system. In Thermus thermophilus (strain ATCC 27634 / DSM 579 / HB8), this protein is Phosphate import ATP-binding protein PstB.